Consider the following 455-residue polypeptide: UDP-glycosyltransferase 75B2 (455 aa).

His16 serves as the catalytic Proton acceptor. Residue His16 participates in an anthocyanidin binding. UDP-alpha-D-glucose-binding residues include Gln337, His352, Trp355, Ser357, Glu360, Asp376, and Gln377.

This sequence belongs to the UDP-glycosyltransferase family.

The enzyme catalyses (indol-3-yl)acetate + UDP-alpha-D-glucose = 1-O-(indol-3-ylacetyl)-beta-D-glucose + UDP. The protein operates within plant hormone metabolism; auxin conjugation. Possesses low catalytic activity in vitro. Also active as glucosyltransferase in vitro on benzoates and benzoate derivatives. The chain is UDP-glycosyltransferase 75B2 (UGT75B2) from Arabidopsis thaliana (Mouse-ear cress).